Consider the following 184-residue polypeptide: Putative manganese efflux pump MntP (184 aa).

6 consecutive transmembrane segments (helical) span residues 3–23 (LLSM…ISVS), 36–56 (ALIS…LGWV), 65–85 (VSAL…LKMI), 103–123 (LLVL…SFAL), 126–146 (ISIW…SLAG), and 163–183 (ALGG…NVSF).

This sequence belongs to the MntP (TC 9.B.29) family.

It localises to the cell membrane. In terms of biological role, probably functions as a manganese efflux pump. In Methanothermobacter thermautotrophicus (strain ATCC 29096 / DSM 1053 / JCM 10044 / NBRC 100330 / Delta H) (Methanobacterium thermoautotrophicum), this protein is Putative manganese efflux pump MntP.